The primary structure comprises 135 residues: Large ribosomal subunit protein uL16c (135 aa).

Belongs to the universal ribosomal protein uL16 family. In terms of assembly, part of the 50S ribosomal subunit.

The protein resides in the plastid. Its subcellular location is the chloroplast. This chain is Large ribosomal subunit protein uL16c, found in Nandina domestica (Heavenly bamboo).